The chain runs to 941 residues: Bifunctional glutamine synthetase adenylyltransferase/adenylyl-removing enzyme (941 aa).

Residues 1 to 437 (MPMPTVSMSP…AAEFAELLAP (437 aa)) form an adenylyl removase region. Residues 444–941 (PDALADYWRA…FPLGKDETAL (498 aa)) are adenylyl transferase.

This sequence belongs to the GlnE family. It depends on Mg(2+) as a cofactor.

It carries out the reaction [glutamine synthetase]-O(4)-(5'-adenylyl)-L-tyrosine + phosphate = [glutamine synthetase]-L-tyrosine + ADP. It catalyses the reaction [glutamine synthetase]-L-tyrosine + ATP = [glutamine synthetase]-O(4)-(5'-adenylyl)-L-tyrosine + diphosphate. Functionally, involved in the regulation of glutamine synthetase GlnA, a key enzyme in the process to assimilate ammonia. When cellular nitrogen levels are high, the C-terminal adenylyl transferase (AT) inactivates GlnA by covalent transfer of an adenylyl group from ATP to specific tyrosine residue of GlnA, thus reducing its activity. Conversely, when nitrogen levels are low, the N-terminal adenylyl removase (AR) activates GlnA by removing the adenylyl group by phosphorolysis, increasing its activity. The regulatory region of GlnE binds the signal transduction protein PII (GlnB) which indicates the nitrogen status of the cell. The sequence is that of Bifunctional glutamine synthetase adenylyltransferase/adenylyl-removing enzyme from Xanthomonas axonopodis pv. citri (strain 306).